Consider the following 193-residue polypeptide: Large ribosomal subunit protein uL18 (193 aa).

The protein belongs to the universal ribosomal protein uL18 family. Part of the 50S ribosomal subunit. Contacts the 5S and 23S rRNAs.

This is one of the proteins that bind and probably mediate the attachment of the 5S RNA into the large ribosomal subunit, where it forms part of the central protuberance. In Methanobrevibacter smithii (strain ATCC 35061 / DSM 861 / OCM 144 / PS), this protein is Large ribosomal subunit protein uL18.